The primary structure comprises 214 residues: Cell division protein SepF (214 aa).

The segment at 23 to 70 is disordered; the sequence is YYDDRAPSRGFPRPRFDDGYGRYDGDDYDDPRREPADCPPPAGYRGGY. Residues 36 to 58 show a composition bias toward basic and acidic residues; sequence PRFDDGYGRYDGDDYDDPRREPA.

The protein belongs to the SepF family. Homodimer. Interacts with FtsZ.

The protein localises to the cytoplasm. In terms of biological role, cell division protein that is part of the divisome complex and is recruited early to the Z-ring. Probably stimulates Z-ring formation, perhaps through the cross-linking of FtsZ protofilaments. Its function overlaps with FtsA. The protein is Cell division protein SepF of Mycolicibacterium paratuberculosis (strain ATCC BAA-968 / K-10) (Mycobacterium paratuberculosis).